The chain runs to 45 residues: Turripeptide OL11-like (45 aa).

3 cysteine pairs are disulfide-bonded: Cys-1–Cys-31, Cys-5–Cys-24, and Cys-13–Cys-45. Positions Cys-1–Cys-45 constitute a Kazal-like domain.

Belongs to the conopeptide P-like superfamily. Expressed by the venom duct.

It localises to the secreted. In terms of biological role, acts as a neurotoxin by inhibiting an ion channel. May also act as a serine protease inhibitor, since it possess the kazal serine protease inhibitor signature. This chain is Turripeptide OL11-like, found in Lophiotoma albina (Sea snail).